A 117-amino-acid polypeptide reads, in one-letter code: UPF0342 protein lmo2223 (117 aa).

The protein belongs to the UPF0342 family.

The chain is UPF0342 protein lmo2223 from Listeria monocytogenes serovar 1/2a (strain ATCC BAA-679 / EGD-e).